The primary structure comprises 96 residues: UPF0235 protein CKO_04329 (96 aa).

Belongs to the UPF0235 family.

The protein is UPF0235 protein CKO_04329 of Citrobacter koseri (strain ATCC BAA-895 / CDC 4225-83 / SGSC4696).